The chain runs to 314 residues: tRNA dimethylallyltransferase (314 aa).

Residues 1–24 (MAEEPQRSPAPTSPFAFTVPSNPL) form a disordered region. ATP is bound at residue 40 to 47 (GPTASGKS). Residue 42–47 (TASGKS) participates in substrate binding.

This sequence belongs to the IPP transferase family. In terms of assembly, monomer. Mg(2+) serves as cofactor.

It carries out the reaction adenosine(37) in tRNA + dimethylallyl diphosphate = N(6)-dimethylallyladenosine(37) in tRNA + diphosphate. Catalyzes the transfer of a dimethylallyl group onto the adenine at position 37 in tRNAs that read codons beginning with uridine, leading to the formation of N6-(dimethylallyl)adenosine (i(6)A). This Cereibacter sphaeroides (strain ATCC 17029 / ATH 2.4.9) (Rhodobacter sphaeroides) protein is tRNA dimethylallyltransferase.